Here is a 146-residue protein sequence, read N- to C-terminus: UPF0178 protein BCAH820_3075 (146 aa).

Belongs to the UPF0178 family.

The chain is UPF0178 protein BCAH820_3075 from Bacillus cereus (strain AH820).